Reading from the N-terminus, the 236-residue chain is Small ribosomal subunit protein uS2c (236 aa).

Belongs to the universal ribosomal protein uS2 family.

Its subcellular location is the plastid. The protein localises to the chloroplast. This Helianthus annuus (Common sunflower) protein is Small ribosomal subunit protein uS2c (rps2).